The primary structure comprises 175 residues: Peptide deformylase (175 aa).

Fe cation contacts are provided by cysteine 94 and histidine 136. Glutamate 137 is a catalytic residue. Histidine 140 contributes to the Fe cation binding site.

This sequence belongs to the polypeptide deformylase family. Requires Fe(2+) as cofactor.

It carries out the reaction N-terminal N-formyl-L-methionyl-[peptide] + H2O = N-terminal L-methionyl-[peptide] + formate. In terms of biological role, removes the formyl group from the N-terminal Met of newly synthesized proteins. Requires at least a dipeptide for an efficient rate of reaction. N-terminal L-methionine is a prerequisite for activity but the enzyme has broad specificity at other positions. This is Peptide deformylase from Brucella suis biovar 1 (strain 1330).